A 2085-amino-acid polypeptide reads, in one-letter code: Protein MLP1 homolog (2085 aa).

Coiled-coil stretches lie at residues 44-367 (KIRE…SHDG), 399-513 (KATQ…HVLI), 568-630 (YELQ…RMKS), 675-1205 (ANEA…KRTQ), 1232-1667 (LRRE…LQQE), and 1744-1799 (EIEA…AAKE). A disordered region spans residues 365-398 (HDGVPGSVPQTPRANGSLLARPSSPFGTPASLRG). The interval 934 to 953 (AERLRPLPTPRAPAAAEQPS) is disordered. A Nuclear localization signal motif is present at residues 1159–1166 (ERRQRLEQ). Polar residues predominate over residues 1482-1503 (LATATEKNTSLQQQLAASSTEQ). Disordered stretches follow at residues 1482–1514 (LATA…AAPS) and 1567–1591 (SGGD…DEER). Residues 1504–1514 (PAAAPVSAAPS) are compositionally biased toward low complexity. The segment covering 1574 to 1584 (AETSVSAQPSA) has biased composition (polar residues). Positions 1816–2085 (KPPAPAQAPA…GGGGGGGGNQ (270 aa)) are disordered. Pro residues predominate over residues 1817–1827 (PPAPAQAPAPA). Composition is skewed to low complexity over residues 1843–1858 (VAPA…QAPS), 1910–1974 (QAGQ…PVPA), and 1982–1994 (ARTA…AGPR). The segment covering 1995–2016 (GARGGRGGGFVGAGRGAGGAAG) has biased composition (gly residues). Over residues 2028-2040 (GGATATAAAAAAA) the composition is skewed to low complexity. Composition is skewed to gly residues over residues 2041–2051 (GGAGGSAGAGN) and 2076–2085 (GGGGGGGGNQ).

The nuclear pore complex (NPC) constitutes the exclusive means of nucleocytoplasmic transport. NPCs allow the passive diffusion of ions and small molecules and the active, nuclear transport receptor-mediated bidirectional transport of macromolecules such as proteins, RNAs, ribonucleoparticles (RNPs), and ribosomal subunits across the nuclear envelope. The 55-60 MDa NPC is composed of at least 28 different subunits: AMO1, ELYS, GLE1, GLE2, MLP1, NDC1, NIC96, NSP1, NUP133, NUP145, NUP152, NUP159, NUP170, NUP188, NUP192, NUP37, NUP49, NUP53, NUP56, NUP57, NUP82, NUP84, NUP85, POM152, POM33, POM34, SEC13 and SEH1. Due to its 8-fold rotational symmetry, all subunits are present with 8 copies or multiples thereof.

Its subcellular location is the nucleus. In terms of biological role, involved in the structural and functional organization of perinuclear chromatin. Associates with the nuclear pore complex and form filamentous structures along the nuclear periphery. The chain is Protein MLP1 homolog (MLP1) from Chaetomium thermophilum (strain DSM 1495 / CBS 144.50 / IMI 039719) (Thermochaetoides thermophila).